Here is a 295-residue protein sequence, read N- to C-terminus: Alpha-ketoglutarate-dependent sulfate ester dioxygenase (295 aa).

His-71 is a binding site for substrate. Fe cation contacts are provided by His-98 and Asp-100. Substrate is bound at residue Val-101. Thr-125 contributes to the 2-oxoglutarate binding site. Residue His-252 participates in Fe cation binding. The 2-oxoglutarate site is built by Arg-263 and Arg-267.

Belongs to the TfdA dioxygenase family. It depends on Fe(2+) as a cofactor.

The catalysed reaction is a primary linear alkyl sulfate ester + 2-oxoglutarate + O2 = an aldehyde + sulfate + succinate + CO2 + H(+). It catalyses the reaction 2-ethylhexyl sulfate + 2-oxoglutarate + O2 = 2-ethylhexanal + sulfate + succinate + CO2 + H(+). It carries out the reaction hexyl sulfate + 2-oxoglutarate + O2 = hexanal + sulfate + succinate + CO2 + H(+). The enzyme catalyses pentyl sulfate + 2-oxoglutarate + O2 = pentanal + sulfate + succinate + CO2 + H(+). The catalysed reaction is heptyl sulfate + 2-oxoglutarate + O2 = heptanal + sulfate + succinate + CO2 + H(+). Its function is as follows. Alpha-ketoglutarate-dependent sulfate ester dioxygenase, which oxidizes medium-chain alkyl-sulfate esters. Shows preference for 2-ethylhexyl sulfate (2-EHS) in vitro, leading to the formation of succinate and 2-ethylhexanal. Has likely a role in sulfate scavenging in vivo. In terms of biological role, also causes the inactivation of the 2-carboxyquinoxaline Ty38c (an antitubercular compound that inhibits DprE1) via oxidative decarboxylation, using Ty38c instead of alpha-ketoglutarate as a substrate. Is thus responsible for primary resistance of M.tuberculosis to Ty38c in vitro. Overexpression of Rv3406 causes resistance to Ty38c. This is Alpha-ketoglutarate-dependent sulfate ester dioxygenase from Mycobacterium tuberculosis (strain ATCC 25618 / H37Rv).